Consider the following 446-residue polypeptide: NAD(P)H sulfur oxidoreductase (CoA-dependent) (446 aa).

A17–A18 lines the FAD pocket. A CoA-binding site is contributed by R28. FAD contacts are provided by residues E39–A40 and H46–P48. CoA-binding positions include S45 to C49, H66 to Y67, and R76. Residue C49 is the Redox-active of the active site. V86, D284, and A302 together coordinate FAD. Positions 306 and 362 each coordinate CoA. Y426 is an FAD binding site. Residues W434 and R442 each coordinate CoA.

Belongs to the class-III pyridine nucleotide-disulfide oxidoreductase family. It depends on FAD as a cofactor.

The catalysed reaction is hydrogen sulfide + NADP(+) = sulfur + NADPH. The enzyme catalyses hydrogen sulfide + NAD(+) = sulfur + NADH. Catalyzes the CoA-dependent reduction of elemental sulfur (S(0)) to produce hydrogen sulfide. The polypeptide is NAD(P)H sulfur oxidoreductase (CoA-dependent) (Pyrococcus abyssi (strain GE5 / Orsay)).